We begin with the raw amino-acid sequence, 123 residues long: WAP four-disulfide core domain protein 2 (123 aa).

A signal peptide spans 1 to 26; the sequence is MPACRLGLLVASLLLGLLLGLPPVTG. WAP domains lie at 28–69 and 72–122; these read GAEK…VTIC and PNEK…VTPV. 8 disulfide bridges follow: Cys35-Cys61, Cys44-Cys65, Cys48-Cys60, Cys54-Cys69, Cys79-Cys109, Cys92-Cys113, Cys96-Cys108, and Cys102-Cys118.

In terms of assembly, homotrimer; disulfide-linked. Detected in the distal parts of the epididymis.

The protein localises to the secreted. In terms of biological role, broad range protease inhibitor. The sequence is that of WAP four-disulfide core domain protein 2 (WFDC2) from Sus scrofa (Pig).